The chain runs to 492 residues: Probable cytochrome P450 313a3 (492 aa).

Cys-438 provides a ligand contact to heme.

Belongs to the cytochrome P450 family. The cofactor is heme.

The protein localises to the endoplasmic reticulum membrane. It localises to the microsome membrane. Functionally, may be involved in the metabolism of insect hormones and in the breakdown of synthetic insecticides. The sequence is that of Probable cytochrome P450 313a3 (Cyp313a3) from Drosophila melanogaster (Fruit fly).